The primary structure comprises 227 residues: Cytochrome c oxidase subunit 2 (227 aa).

Residues Met-1–Ser-14 are Mitochondrial intermembrane-facing. Residues Pro-15 to Met-45 traverse the membrane as a helical segment. Over Leu-46 to Gln-59 the chain is Mitochondrial matrix. The helical transmembrane segment at Glu-60–Met-87 threads the bilayer. Residues Asp-88–Val-227 are Mitochondrial intermembrane-facing. The Cu cation site is built by His-161, Cys-196, Glu-198, Cys-200, His-204, and Met-207. Mg(2+) is bound at residue Glu-198. Tyr-218 bears the Phosphotyrosine mark.

This sequence belongs to the cytochrome c oxidase subunit 2 family. As to quaternary structure, component of the cytochrome c oxidase (complex IV, CIV), a multisubunit enzyme composed of 14 subunits. The complex is composed of a catalytic core of 3 subunits MT-CO1, MT-CO2 and MT-CO3, encoded in the mitochondrial DNA, and 11 supernumerary subunits COX4I, COX5A, COX5B, COX6A, COX6B, COX6C, COX7A, COX7B, COX7C, COX8 and NDUFA4, which are encoded in the nuclear genome. The complex exists as a monomer or a dimer and forms supercomplexes (SCs) in the inner mitochondrial membrane with NADH-ubiquinone oxidoreductase (complex I, CI) and ubiquinol-cytochrome c oxidoreductase (cytochrome b-c1 complex, complex III, CIII), resulting in different assemblies (supercomplex SCI(1)III(2)IV(1) and megacomplex MCI(2)III(2)IV(2)). Found in a complex with TMEM177, COA6, COX18, COX20, SCO1 and SCO2. Interacts with TMEM177 in a COX20-dependent manner. Interacts with COX20. Interacts with COX16. Requires Cu cation as cofactor.

Its subcellular location is the mitochondrion inner membrane. The enzyme catalyses 4 Fe(II)-[cytochrome c] + O2 + 8 H(+)(in) = 4 Fe(III)-[cytochrome c] + 2 H2O + 4 H(+)(out). Functionally, component of the cytochrome c oxidase, the last enzyme in the mitochondrial electron transport chain which drives oxidative phosphorylation. The respiratory chain contains 3 multisubunit complexes succinate dehydrogenase (complex II, CII), ubiquinol-cytochrome c oxidoreductase (cytochrome b-c1 complex, complex III, CIII) and cytochrome c oxidase (complex IV, CIV), that cooperate to transfer electrons derived from NADH and succinate to molecular oxygen, creating an electrochemical gradient over the inner membrane that drives transmembrane transport and the ATP synthase. Cytochrome c oxidase is the component of the respiratory chain that catalyzes the reduction of oxygen to water. Electrons originating from reduced cytochrome c in the intermembrane space (IMS) are transferred via the dinuclear copper A center (CU(A)) of subunit 2 and heme A of subunit 1 to the active site in subunit 1, a binuclear center (BNC) formed by heme A3 and copper B (CU(B)). The BNC reduces molecular oxygen to 2 water molecules using 4 electrons from cytochrome c in the IMS and 4 protons from the mitochondrial matrix. This chain is Cytochrome c oxidase subunit 2 (MT-CO2), found in Urocyon cinereoargenteus (Gray fox).